The primary structure comprises 129 residues: Small ribosomal subunit protein uS9 (129 aa).

It belongs to the universal ribosomal protein uS9 family.

The chain is Small ribosomal subunit protein uS9 from Chlorobium limicola (strain DSM 245 / NBRC 103803 / 6330).